The chain runs to 330 residues: D-lactate dehydrogenase (330 aa).

NAD(+) is bound by residues 155 to 156 (RI), Asp175, 206 to 207 (MP), Asn212, 233 to 235 (MAR), and Asp259. Arg235 is an active-site residue. Glu264 is an active-site residue. His296 acts as the Proton donor in catalysis.

Belongs to the D-isomer specific 2-hydroxyacid dehydrogenase family.

It carries out the reaction (R)-lactate + NAD(+) = pyruvate + NADH + H(+). This chain is D-lactate dehydrogenase (ldhD), found in Streptococcus pyogenes serotype M1.